Reading from the N-terminus, the 299-residue chain is ATP phosphoribosyltransferase (299 aa).

This sequence belongs to the ATP phosphoribosyltransferase family. Long subfamily. In terms of assembly, equilibrium between an active dimeric form, an inactive hexameric form and higher aggregates. Interconversion between the various forms is largely reversible and is influenced by the natural substrates and inhibitors of the enzyme. Mg(2+) is required as a cofactor.

It localises to the cytoplasm. The catalysed reaction is 1-(5-phospho-beta-D-ribosyl)-ATP + diphosphate = 5-phospho-alpha-D-ribose 1-diphosphate + ATP. It participates in amino-acid biosynthesis; L-histidine biosynthesis; L-histidine from 5-phospho-alpha-D-ribose 1-diphosphate: step 1/9. With respect to regulation, feedback inhibited by histidine. Functionally, catalyzes the condensation of ATP and 5-phosphoribose 1-diphosphate to form N'-(5'-phosphoribosyl)-ATP (PR-ATP). Has a crucial role in the pathway because the rate of histidine biosynthesis seems to be controlled primarily by regulation of HisG enzymatic activity. The polypeptide is ATP phosphoribosyltransferase (Buchnera aphidicola subsp. Schlechtendalia chinensis).